Here is a 410-residue protein sequence, read N- to C-terminus: Chlorobenzene dioxygenase, ferredoxin reductase component (410 aa).

4 to 35 (HVAIIGNGVAGFTTAQALRAEGFEGRISLIGN) contacts FAD. 145-173 (RLVIAGGGLIGCEVATTARKLGLAVTILE) lines the NAD(+) pocket.

This sequence belongs to the bacterial ring-hydroxylating dioxygenase ferredoxin reductase family. In terms of assembly, this dioxygenase system consists of four proteins: the two subunits of the oxygenase component (TecA1 and TecA2), a ferredoxin (TecA3) and a ferredoxin reductase (TecA4). FAD serves as cofactor.

The enzyme catalyses 2 reduced [2Fe-2S]-[ferredoxin] + NAD(+) + H(+) = 2 oxidized [2Fe-2S]-[ferredoxin] + NADH. It participates in aromatic compound metabolism. Its function is as follows. Part of the chlorobenzene dioxygenase system that catalyzes the dihydroxylation of a range of aromatic compounds, including chlorinated benzenes and toluenes, and dinuclear aromatics such as biphenyl and dibenzo-p-dioxin. The protein is Chlorobenzene dioxygenase, ferredoxin reductase component of Cupriavidus sp. (strain PS12).